The chain runs to 623 residues: DELLA protein RHT-1 (623 aa).

Residues 1–27 (MKREYQDAGGSGGGGGGMGSSEDKMMV) form a disordered region. The span at 9–19 (GGSGGGGGGMG) shows a compositional bias: gly residues. A DELLA motif motif is present at residues 38–42 (DELLA). 2 disordered regions span residues 109 to 138 (LNAP…GYFD) and 159 to 201 (AGAT…GARS). A compositionally biased stretch (pro residues) spans 111-120 (APPPPLPPAP). 2 stretches are compositionally biased toward low complexity: residues 121 to 131 (QLNASTSSTVT) and 181 to 201 (GGSS…GARS). One can recognise a GRAS domain in the interval 225-619 (VDTQEAGIRL…RPLIATSAWR (395 aa)). The leucine repeat I (LRI) stretch occupies residues 232-288 (IRLVHALLACAEAVQQENLSAAEALVKQIPLLAASQGGAMRKVAAYFGEALARRVFR). A LxCxE motif motif is present at residues 239–243 (LACAE). The segment at 307–372 (HAHFYESCPY…GGPPSFRLTG (66 aa)) is VHIID. The VHIID motif lies at 338-342 (VHVVD). The interval 386-425 (QVGWKLAQFAHTIRVDFQYRGLVAATLADLEPFMLQPEGE) is leucine repeat II (LRII). Residues 435–540 (IAVNSVFEMH…EVYLGRQICN (106 aa)) form a PFYRE region. The SAW stretch occupies residues 543 to 619 (ACEGAERTER…RPLIATSAWR (77 aa)).

Belongs to the GRAS family. DELLA subfamily. Post-translationally, phosphorylated. In terms of processing, ubiquitinated. Upon GA application it is ubiquitinated, leading to its subsequent degradation.

It is found in the nucleus. Probable transcriptional regulator that acts as a repressor of the gibberellin (GA) signaling pathway. Probably acts by participating in large multiprotein complexes that repress transcription of GA-inducible genes. Upon GA application, it is degraded by the proteasome, allowing the GA signaling pathway. The protein is DELLA protein RHT-1 (RHT1) of Triticum aestivum (Wheat).